The chain runs to 429 residues: Ribosomal RNA small subunit methyltransferase B (429 aa).

S-adenosyl-L-methionine-binding positions include 254–260 (CAAPGGK), Asp277, Asp303, and Asp322. Catalysis depends on Cys375, which acts as the Nucleophile. A disordered region spans residues 397 to 419 (ALSETGTPDQPGQQNLPGGEEGD). Positions 400 to 412 (ETGTPDQPGQQNL) are enriched in polar residues.

It belongs to the class I-like SAM-binding methyltransferase superfamily. RsmB/NOP family.

The protein localises to the cytoplasm. The enzyme catalyses cytidine(967) in 16S rRNA + S-adenosyl-L-methionine = 5-methylcytidine(967) in 16S rRNA + S-adenosyl-L-homocysteine + H(+). In terms of biological role, specifically methylates the cytosine at position 967 (m5C967) of 16S rRNA. This Salmonella enteritidis PT4 (strain P125109) protein is Ribosomal RNA small subunit methyltransferase B.